Reading from the N-terminus, the 431-residue chain is Adenylosuccinate synthetase (431 aa).

GTP-binding positions include 13–19 (GDEGKGK) and 41–43 (GHT). Aspartate 14 functions as the Proton acceptor in the catalytic mechanism. Mg(2+)-binding residues include aspartate 14 and glycine 41. IMP contacts are provided by residues 14–17 (DEGK), 39–42 (NAGH), threonine 130, arginine 144, glutamine 225, threonine 240, and arginine 304. Histidine 42 acts as the Proton donor in catalysis. 300 to 306 (AVTGRPR) is a binding site for substrate. GTP contacts are provided by residues arginine 306, 332–334 (KLD), and 415–417 (STG).

Belongs to the adenylosuccinate synthetase family. Homodimer. Requires Mg(2+) as cofactor.

The protein localises to the cytoplasm. It catalyses the reaction IMP + L-aspartate + GTP = N(6)-(1,2-dicarboxyethyl)-AMP + GDP + phosphate + 2 H(+). Its pathway is purine metabolism; AMP biosynthesis via de novo pathway; AMP from IMP: step 1/2. Its function is as follows. Plays an important role in the de novo pathway of purine nucleotide biosynthesis. Catalyzes the first committed step in the biosynthesis of AMP from IMP. This Legionella pneumophila subsp. pneumophila (strain Philadelphia 1 / ATCC 33152 / DSM 7513) protein is Adenylosuccinate synthetase.